A 431-amino-acid chain; its full sequence is Serine hydroxymethyltransferase 3 (431 aa).

Residues Leu131 and Gly135 to Leu137 each bind (6S)-5,6,7,8-tetrahydrofolate. At Lys240 the chain carries N6-(pyridoxal phosphate)lysine.

The protein belongs to the SHMT family. As to quaternary structure, homodimer. It depends on pyridoxal 5'-phosphate as a cofactor.

It is found in the cytoplasm. The catalysed reaction is (6R)-5,10-methylene-5,6,7,8-tetrahydrofolate + glycine + H2O = (6S)-5,6,7,8-tetrahydrofolate + L-serine. Its pathway is one-carbon metabolism; tetrahydrofolate interconversion. It participates in amino-acid biosynthesis; glycine biosynthesis; glycine from L-serine: step 1/1. Catalyzes the reversible interconversion of serine and glycine with tetrahydrofolate (THF) serving as the one-carbon carrier. This reaction serves as the major source of one-carbon groups required for the biosynthesis of purines, thymidylate, methionine, and other important biomolecules. Also exhibits THF-independent aldolase activity toward beta-hydroxyamino acids, producing glycine and aldehydes, via a retro-aldol mechanism. In Colwellia psychrerythraea (strain 34H / ATCC BAA-681) (Vibrio psychroerythus), this protein is Serine hydroxymethyltransferase 3.